A 445-amino-acid chain; its full sequence is Argininosuccinate synthase (445 aa).

Residues 17-25 (AFSGGLDTS) and alanine 43 each bind ATP. Tyrosine 99 contributes to the L-citrulline binding site. ATP contacts are provided by glycine 129 and threonine 131. L-aspartate is bound by residues threonine 131, asparagine 135, and aspartate 136. Asparagine 135 is an L-citrulline binding site. Residue aspartate 136 coordinates ATP. Arginine 139 and serine 192 together coordinate L-citrulline. Residue aspartate 194 coordinates ATP. Residues threonine 201, glutamate 203, and glutamate 280 each coordinate L-citrulline.

It belongs to the argininosuccinate synthase family. Type 2 subfamily. In terms of assembly, homotetramer.

Its subcellular location is the cytoplasm. The catalysed reaction is L-citrulline + L-aspartate + ATP = 2-(N(omega)-L-arginino)succinate + AMP + diphosphate + H(+). It functions in the pathway amino-acid biosynthesis; L-arginine biosynthesis; L-arginine from L-ornithine and carbamoyl phosphate: step 2/3. This is Argininosuccinate synthase from Polaromonas naphthalenivorans (strain CJ2).